The chain runs to 272 residues: GTP cyclohydrolase FolE2 (272 aa).

Belongs to the GTP cyclohydrolase IV family.

It catalyses the reaction GTP + H2O = 7,8-dihydroneopterin 3'-triphosphate + formate + H(+). Its pathway is cofactor biosynthesis; 7,8-dihydroneopterin triphosphate biosynthesis; 7,8-dihydroneopterin triphosphate from GTP: step 1/1. In terms of biological role, converts GTP to 7,8-dihydroneopterin triphosphate. The polypeptide is GTP cyclohydrolase FolE2 (Polynucleobacter asymbioticus (strain DSM 18221 / CIP 109841 / QLW-P1DMWA-1) (Polynucleobacter necessarius subsp. asymbioticus)).